A 130-amino-acid polypeptide reads, in one-letter code: Small ribosomal subunit protein uS9 (130 aa).

Belongs to the universal ribosomal protein uS9 family.

The protein is Small ribosomal subunit protein uS9 of Desulfosudis oleivorans (strain DSM 6200 / JCM 39069 / Hxd3) (Desulfococcus oleovorans).